The following is a 196-amino-acid chain: GTP cyclohydrolase-2 (196 aa).

49–53 (RVHSE) is a GTP binding site. Residues C54, C65, and C67 each contribute to the Zn(2+) site. GTP is bound by residues Q70, 92–94 (EGR), and T114. D126 (proton acceptor) is an active-site residue. R128 acts as the Nucleophile in catalysis. Residues T149 and K154 each contribute to the GTP site.

The protein belongs to the GTP cyclohydrolase II family. As to quaternary structure, homodimer. It depends on Zn(2+) as a cofactor.

The catalysed reaction is GTP + 4 H2O = 2,5-diamino-6-hydroxy-4-(5-phosphoribosylamino)-pyrimidine + formate + 2 phosphate + 3 H(+). Its pathway is cofactor biosynthesis; riboflavin biosynthesis; 5-amino-6-(D-ribitylamino)uracil from GTP: step 1/4. In terms of biological role, catalyzes the conversion of GTP to 2,5-diamino-6-ribosylamino-4(3H)-pyrimidinone 5'-phosphate (DARP), formate and pyrophosphate. The protein is GTP cyclohydrolase-2 of Yersinia pestis.